We begin with the raw amino-acid sequence, 302 residues long: Deoxyhypusine hydroxylase (302 aa).

HEAT-like PBS-type repeat units lie at residues 23–49 (ERFR…AFDD), 54–80 (LKHE…VLKD), 87–113 (VRHE…YKQD), 175–201 (DRYR…GLKD), 206–232 (FRHE…NLED), and 239–265 (VRHE…YAED). Fe cation contacts are provided by His56, Glu57, His89, and Glu90. 4 residues coordinate Fe cation: His208, Glu209, His241, and Glu242.

Belongs to the deoxyhypusine hydroxylase family. It depends on Fe(2+) as a cofactor.

It is found in the endoplasmic reticulum membrane. The catalysed reaction is [eIF5A protein]-deoxyhypusine + AH2 + O2 = [eIF5A protein]-hypusine + A + H2O. Its pathway is protein modification; eIF5A hypusination. Its function is as follows. Catalyzes the hydroxylation of the N(6)-(4-aminobutyl)-L-lysine intermediate to form hypusine, an essential post-translational modification only found in mature eIF-5A factor. Essential for organismal viability and plays a role in a wide number of important processes such as cell growth and proliferation, and regulates induction of autophagy and protein synthesis. Has a role in eIF-5A-mediated translational control. The polypeptide is Deoxyhypusine hydroxylase (Drosophila melanogaster (Fruit fly)).